A 781-amino-acid polypeptide reads, in one-letter code: Catenin beta-1 (781 aa).

Ala-2 carries the N-acetylalanine modification. The interaction with VCL stretch occupies residues 2-23 (ATQADLMELDMAMEPDRKAAVS). Position 23 is a phosphoserine; by GSK3-beta; alternate (Ser-23). Ser-23 carries O-linked (GlcNAc) serine; alternate glycosylation. Phosphoserine; by GSK3-beta is present on Ser-29. Phosphoserine; by GSK3-beta and HIPK2 is present on residues Ser-33 and Ser-37. The tract at residues 34–57 (GIHSGATTTAPSLSGKGNPEEEDV) is disordered. Thr-41 carries the phosphothreonine; by GSK3-beta modification. At Ser-45 the chain carries Phosphoserine. Lys-49 is subject to N6-acetyllysine. Tyr-64 bears the Phosphotyrosine; by PTK6 mark. The residue at position 142 (Tyr-142) is a Phosphotyrosine; by FYN and PTK6. ARM repeat units follow at residues 151–191 (RAIP…IMRS), 193–234 (QMVS…IFKS), 235–276 (GGIP…VRLA), 277–318 (GGLQ…ILAS), 319–360 (GGPQ…IVEA), 361–389 (GGMQ…RNLS), 400–441 (GLLG…VCQV), 442–484 (GGIE…AQNA), 489–530 (YGLP…LREQ), 531–571 (GAIP…EIVE), 594–636 (NTIP…AEGA), and 637–666 (TAPL…SEDK). The interval 156-178 (LTKLLNDEDQVVVNKAAVMVHQL) is interaction with BCL9. Ser-191 carries the post-translational modification Phosphoserine. Ser-246 is modified (phosphoserine; by CDK5). Tyr-331 and Tyr-333 each carry phosphotyrosine. Position 552 is a phosphoserine (Ser-552). Position 556 is a phosphothreonine (Thr-556). Cys-619 is subject to S-nitrosocysteine. Ser-675 is subject to Phosphoserine. The disordered stretch occupies residues 720–781 (HSGGYGQDAL…NQLAWFDTDL (62 aa)). The span at 734–745 (MMEHEMGGHHPG) shows a compositional bias: basic and acidic residues. Positions 772–781 (NQLAWFDTDL) are interaction with SCRIB.

Belongs to the beta-catenin family. In terms of assembly, two separate complex-associated pools are found in the cytoplasm. The majority is present as component of an E-cadherin/ catenin adhesion complex composed of at least E-cadherin/CDH1 and beta-catenin/CTNNB1, and possibly alpha-catenin/CTNNA1; the complex is located to adherens junctions. The stable association of CTNNA1 is controversial as CTNNA1 was shown not to bind to F-actin when assembled in the complex. Alternatively, the CTNNA1-containing complex may be linked to F-actin by other proteins such as LIMA1. Another cytoplasmic pool is part of a large complex containing AXIN1, AXIN2, APC, CSNK1A1 and GSK3B that promotes phosphorylation on N-terminal Ser and Thr residues and ubiquitination of CTNNB1. Interacts directly with AXIN1; the interaction is regulated by CK2 via BTRC and its subsequent degradation by the proteasome. Interacts directly with AXIN1; the interaction is regulated by CDK2 phosphorylation. Wnt-dependent activation of DVL antagonizes the action of GSK3B. When GSK3B activity is inhibited the complex dissociates, CTNNB1 is dephosphorylated and is no longer targeted for destruction. The stabilized protein translocates to the nucleus, where it binds TCF/LEF-1 family members, BCL9, BCL9L and possibly also RUVBL1 and CHD8. Binds CTNNBIP and EP300. CTNNB1 forms a ternary complex with LEF1 and EP300 that is disrupted by CTNNBIP1 binding. Interacts with TAX1BP3 (via the PDZ domain); this interaction inhibits the transcriptional activity of CTNNB1. Interacts with AJAP1, BAIAP1, CARM1, CTNNA3, CXADR and PCDH11Y. Binds NHERF1. Interacts with GLIS2. Interacts with XIRP1. Interacts with PTPRU (via the cytoplasmic juxtamembrane domain) and with SLC30A9. Interacts with EMD. Interacts with SCRIB. Interacts with TNIK and TCF7L2. Interacts with SESTD1 and TRPC4. Interacts directly with AXIN1; the interaction is regulated by CDK2 phosphorylation of AXIN1. Interacts with CAV1. Interacts with TRPV4. The TRPV4 and CTNNB1 complex can interact with CDH1. Interacts with VCL. Interacts with PTPRJ. Interacts with PKT7. Interacts with NANOS1. Interacts with CDK2, NDRG2, NEK2 and CDK5. Found in a complex composed of MACF1, APC, AXIN1, CTNNB1 and GSK3B. Interacts with PTK6. Interacts with SOX7; this interaction may lead to proteasomal degradation of active CTNNB1 and thus inhibition of Wnt/beta-catenin-stimulated transcription. Identified in a complex with HINT1 and MITF. Interacts with FHIT. The CTNNB1 and TCF4 complex interacts with PML. Interacts with FERMT2. Identified in a complex with TCF4 and FERMT2. Interacts with RAPGEF2. Interacts with FAT1 (via the cytoplasmic domain). Interacts with RORA. May interact with P-cadherin/CDH3. Interacts with RNF220. Interacts with CTNND2. Interacts (via the C-terminal region) with CBY1. The complex composed, at least, of APC, CTNNB1 and GSK3B interacts with JPT1; the interaction requires the inactive form of GSK3B (phosphorylated at 'Ser-9'). Interacts with DLG5. Interacts with FAM53B; promoting translocation to the nucleus. Interacts with TMEM170B. Interacts with AHI1. Interacts with GID8. Component of an cadherin:catenin adhesion complex composed of at least of CDH26, beta-catenin/CTNNB1, alpha-catenin/CTNNA1 and p120 catenin/CTNND1. Forms a complex comprising APPL1, RUVBL2, APPL2, HDAC1 and HDAC2. Interacts with IRF2BPL; mediates the ubiquitination and degradation of CTNNB1. Interacts with AMFR. Interacts with LMBR1L. Interacts with SOX30; prevents interaction of CTNNB1 with TCF7L2/TCF4 and leads to inhibition of Wnt signaling. Interacts with SOX9; inhibiting CTNNB1 activity by competing with the binding sites of TCF/LEF within CTNNB1, thereby inhibiting the Wnt signaling. Interacts with SPN/CD43 cytoplasmic tail. Interacts (when phosphorylated at Tyr-333) with isoform M2 of PKM (PKM2); promoting transcription activation. Interacts with PKP2 (via HEAD domain). Interacts with CDH1. Interacts (when unphosphorylated) with FLYWCH1, perhaps preventing interaction of CTNNB1 with TCF4, and thereby regulating transcription activation; phosphorylation of CTNNB1 may inhibit the interaction. Interacts (via the central armadillo domains) with probable transcriptional regulator ADNP (via N-terminal region); interaction is direct and stabilizes CTNNB1 by modulating its phosphorylation by glycogen synthase kinase-3 beta GSK3B. Interacts with NR5A2. Interacts with DSG2; the interaction promotes localization of CTNNB1 at cell junctions thus reducing its nuclear localization and subsequent transcription of CTNNB1/TCF-target genes. Phosphorylation by GSK3B requires prior phosphorylation of Ser-45 by another kinase. Phosphorylation proceeds then from Thr-41 to Ser-33. Phosphorylated by NEK2. EGF stimulates tyrosine phosphorylation. Phosphorylated on Ser-33 and Ser-37 by HIPK2. This phosphorylation triggers proteasomal degradation. Phosphorylation at Ser-552 by AMPK promotes stabilization of the protein, enhancing TCF/LEF-mediated transcription. Phosphorylation on Ser-191 and Ser-246 by CDK5. Phosphorylation by CDK2 regulates insulin internalization. Phosphorylation by PTK6 at Tyr-64, Tyr-142, Tyr-331 and/or Tyr-333 with the predominant site at Tyr-64 is not essential for inhibition of transcriptional activity. Phosphorylation by SRC at Tyr-333 promotes interaction with isoform M2 of PKM (PKM2); promoting transcription activation. In terms of processing, ubiquitinated by the SCF(BTRC) E3 ligase complex when phosphorylated by GSK3B, leading to its degradation. Ubiquitinated by a E3 ubiquitin ligase complex containing UBE2D1, SIAH1, CACYBP/SIP, SKP1, APC and TBL1X, leading to its subsequent proteasomal degradation. Ubiquitinated and degraded following interaction with SOX9. Ubiquitinated via 'Lys-11'- and 'Lys-29'-linked ubiquitin chains by UBR5, leading to its stabilization. Post-translationally, S-nitrosylation at Cys-619 within adherens junctions promotes VEGF-induced, NO-dependent endothelial cell permeability by disrupting interaction with E-cadherin, thus mediating disassembly adherens junctions. O-glycosylation at Ser-23 decreases nuclear localization and transcriptional activity, and increases localization to the plasma membrane and interaction with E-cadherin CDH1. In terms of processing, deacetylated at Lys-49 by SIRT1. Expressed in the testis.

Its subcellular location is the cytoplasm. The protein localises to the nucleus. It is found in the cytoskeleton. It localises to the cell junction. The protein resides in the adherens junction. Its subcellular location is the cell membrane. The protein localises to the microtubule organizing center. It is found in the centrosome. It localises to the spindle pole. The protein resides in the synapse. Its subcellular location is the cilium basal body. Key downstream component of the canonical Wnt signaling pathway. In the absence of Wnt, forms a complex with AXIN1, AXIN2, APC, CSNK1A1 and GSK3B that promotes phosphorylation on N-terminal Ser and Thr residues and ubiquitination of CTNNB1 via BTRC and its subsequent degradation by the proteasome. In the presence of Wnt ligand, CTNNB1 is not ubiquitinated and accumulates in the nucleus, where it acts as a coactivator for transcription factors of the TCF/LEF family, leading to activate Wnt responsive genes. Also acts as a coactivator for other transcription factors, such as NR5A2. Promotes epithelial to mesenchymal transition/mesenchymal to epithelial transition (EMT/MET) via driving transcription of CTNNB1/TCF-target genes. Involved in the regulation of cell adhesion, as component of an E-cadherin:catenin adhesion complex. Acts as a negative regulator of centrosome cohesion. Involved in the CDK2/PTPN6/CTNNB1/CEACAM1 pathway of insulin internalization. Blocks anoikis of malignant kidney and intestinal epithelial cells and promotes their anchorage-independent growth by down-regulating DAPK2. Disrupts PML function and PML-NB formation by inhibiting RANBP2-mediated sumoylation of PML. Promotes neurogenesis by maintaining sympathetic neuroblasts within the cell cycle. Involved in chondrocyte differentiation via interaction with SOX9: SOX9-binding competes with the binding sites of TCF/LEF within CTNNB1, thereby inhibiting the Wnt signaling. Acts as a positive regulator of odontoblast differentiation during mesenchymal tooth germ formation, via promoting the transcription of differentiation factors such as LEF1, BMP2 and BMP4. Activity is repressed in a MSX1-mediated manner at the bell stage of mesenchymal tooth germ formation which prevents premature differentiation of odontoblasts. This is Catenin beta-1 from Rattus norvegicus (Rat).